The primary structure comprises 196 residues: Putative 3-methyladenine DNA glycosylase (196 aa).

This sequence belongs to the DNA glycosylase MPG family.

This is Putative 3-methyladenine DNA glycosylase from Chlorobium phaeovibrioides (strain DSM 265 / 1930) (Prosthecochloris vibrioformis (strain DSM 265)).